A 208-amino-acid chain; its full sequence is FMN-dependent NADH:quinone oxidoreductase (208 aa).

FMN contacts are provided by residues serine 10, 16–18 (SRS), and 96–99 (MYNF).

This sequence belongs to the azoreductase type 1 family. In terms of assembly, homodimer. FMN serves as cofactor.

The catalysed reaction is 2 a quinone + NADH + H(+) = 2 a 1,4-benzosemiquinone + NAD(+). The enzyme catalyses N,N-dimethyl-1,4-phenylenediamine + anthranilate + 2 NAD(+) = 2-(4-dimethylaminophenyl)diazenylbenzoate + 2 NADH + 2 H(+). In terms of biological role, quinone reductase that provides resistance to thiol-specific stress caused by electrophilic quinones. Functionally, also exhibits azoreductase activity. Catalyzes the reductive cleavage of the azo bond in aromatic azo compounds to the corresponding amines. The protein is FMN-dependent NADH:quinone oxidoreductase of Xanthobacter autotrophicus (strain ATCC BAA-1158 / Py2).